The primary structure comprises 1187 residues: Protein WWC2 (1187 aa).

WW domains follow at residues 10 to 43 (LPLP…DPRD) and 57 to 90 (DELP…DPRK). 2 coiled-coil regions span residues 121 to 194 (KEQR…YKQQ) and 224 to 256 (ELKS…FHLD). Position 286 is a phosphoserine (Ser-286). Residues 302–423 (LAEKVRLSLQ…EETTKLTTSL (122 aa)) are a coiled coil. The interval 438-464 (SSGSSLGSLASSRGSLNTSSRGSLNSL) is disordered. Residues 697-820 (ETAQVQIGLR…FSNEIFMLWY (124 aa)) form the C2 domain. Disordered regions lie at residues 830 to 849 (CKKN…QPML) and 874 to 963 (ELAQ…ETNT). A coiled-coil region spans residues 859 to 885 (ALLARTSAELLAVEQELAQEEEEEELR). A compositionally biased stretch (acidic residues) spans 875–884 (LAQEEEEEEL). Thr-999 is modified (phosphothreonine). Ser-1017 is modified (phosphoserine). Residues 1026–1045 (SLFVRNSTERRSLRVKRAVC) form an interaction with PRKCZ region. Residues 1063–1143 (DLELDLQASL…DLNAERLMRQ (81 aa)) are a coiled coil.

The protein belongs to the WWC family. As to quaternary structure, forms homodimers and heterodimers with WWC1 and WWC3. Interacts with DLC1 and PRKCZ. Interacts (via WW domains) with LATS1 and LATS2.

Its subcellular location is the cytoplasm. The protein localises to the cytosol. In terms of biological role, regulator of the Hippo signaling pathway, also known as the Salvador-Warts-Hippo (SWH) pathway. Enhances phosphorylation of LATS1 and YAP1 and negatively regulates cell proliferation and organ growth due to a suppression of the transcriptional activity of YAP1, the major effector of the Hippo pathway. This chain is Protein WWC2 (Wwc2), found in Mus musculus (Mouse).